A 297-amino-acid chain; its full sequence is Cell death peptidase (297 aa).

The next 2 membrane-spanning stretches (helical) occupy residues 61 to 82 (IVLT…WVFT) and 149 to 178 (IFLC…AFST).

It belongs to the peptidase U49 family.

The protein resides in the cell membrane. Interacts with a short DNA sequence about one-quarter of the way into the major capsid protein gene 23 of T4; general translation inhibition occurs when this late gene of the virus is expressed. In Escherichia coli (strain K12), this protein is Cell death peptidase (lit).